A 190-amino-acid chain; its full sequence is Elongation factor P-like protein (190 aa).

Belongs to the elongation factor P family.

This is Elongation factor P-like protein from Psychromonas ingrahamii (strain DSM 17664 / CCUG 51855 / 37).